Consider the following 481-residue polypeptide: Cobyric acid synthase (481 aa).

The GATase cobBQ-type domain occupies Val244–Ala431. Cys325 serves as the catalytic Nucleophile. The active site involves His423.

Belongs to the CobB/CobQ family. CobQ subfamily.

The protein operates within cofactor biosynthesis; adenosylcobalamin biosynthesis. Catalyzes amidations at positions B, D, E, and G on adenosylcobyrinic A,C-diamide. NH(2) groups are provided by glutamine, and one molecule of ATP is hydrogenolyzed for each amidation. The sequence is that of Cobyric acid synthase from Ralstonia nicotianae (strain ATCC BAA-1114 / GMI1000) (Ralstonia solanacearum).